We begin with the raw amino-acid sequence, 336 residues long: Dihydroorotate dehydrogenase (quinone) (336 aa).

FMN is bound by residues 62-66 (AGLDK) and Thr86. Lys66 provides a ligand contact to substrate. 111–115 (NRMGF) provides a ligand contact to substrate. FMN is bound by residues Asn139 and Asn172. Asn172 is a binding site for substrate. Ser175 serves as the catalytic Nucleophile. Asn177 provides a ligand contact to substrate. FMN contacts are provided by Lys217 and Thr245. Substrate is bound at residue 246–247 (NT). Residues Gly268, Gly297, and 318 to 319 (YS) each bind FMN.

Belongs to the dihydroorotate dehydrogenase family. Type 2 subfamily. As to quaternary structure, monomer. It depends on FMN as a cofactor.

Its subcellular location is the cell membrane. The catalysed reaction is (S)-dihydroorotate + a quinone = orotate + a quinol. Its pathway is pyrimidine metabolism; UMP biosynthesis via de novo pathway; orotate from (S)-dihydroorotate (quinone route): step 1/1. Catalyzes the conversion of dihydroorotate to orotate with quinone as electron acceptor. The protein is Dihydroorotate dehydrogenase (quinone) of Escherichia coli (strain UTI89 / UPEC).